The following is a 373-amino-acid chain: MEDFIYYNGKKYRKGYTTGTCAAAAAKACVEMILTQEEVSAVQVTTTGGTILEIPVAYQKFSKDKATAAVQKDGGDDIDATHGMWIFVDIDLTDNAEVVLDGGVGIGRATQKGISVAVGEAAINPAPRKNILATVRESLGENRGAKILVYAPEGEERAKRTMNSNLGIIGGISILGTTGIVTPMSDEGWKKSLSMELEMKRNQGLDQIILVPGNYGDDFVQNTLGFSSGNIVSMSNFVGYMLKETQRLAFKKVLMVGHFGKLVKVSAGIFTTYSKDADARAEILVANLALLGAPLSLLQAVEKCNTTEAAGELIEEAGFTQVYEVIAQKIKARSERFLKFTKPSVEIDVVTFSTERGLLAATKDIDVLREEWR.

Belongs to the CbiD family.

The catalysed reaction is Co-precorrin-5B + S-adenosyl-L-methionine = Co-precorrin-6A + S-adenosyl-L-homocysteine. The protein operates within cofactor biosynthesis; adenosylcobalamin biosynthesis; cob(II)yrinate a,c-diamide from sirohydrochlorin (anaerobic route): step 6/10. Functionally, catalyzes the methylation of C-1 in cobalt-precorrin-5B to form cobalt-precorrin-6A. The chain is Cobalt-precorrin-5B C(1)-methyltransferase from Listeria monocytogenes serovar 1/2a (strain ATCC BAA-679 / EGD-e).